The sequence spans 1026 residues: Cadherin-like and PC-esterase domain-containing protein 1 (1026 aa).

Positions 1–34 (MVCRPVFPCRRRFCPRPFLVGLVVAICLFYQTLT) are cleaved as a signal peptide. Residues Asn251, Asn404, Asn413, Asn737, Asn791, and Asn985 are each glycosylated (N-linked (GlcNAc...) asparagine).

This sequence belongs to the PC-esterase family.

The chain is Cadherin-like and PC-esterase domain-containing protein 1 (CPED1) from Homo sapiens (Human).